A 338-amino-acid chain; its full sequence is Biotin synthase (338 aa).

The Radical SAM core domain maps to 59–284 (EEVEIEGIVS…RTTLRFAGGR (226 aa)). [4Fe-4S] cluster contacts are provided by Cys74, Cys78, and Cys81. Positions 117, 209, and 279 each coordinate [2Fe-2S] cluster.

The protein belongs to the radical SAM superfamily. Biotin synthase family. In terms of assembly, homodimer. [4Fe-4S] cluster is required as a cofactor. [2Fe-2S] cluster serves as cofactor.

It catalyses the reaction (4R,5S)-dethiobiotin + (sulfur carrier)-SH + 2 reduced [2Fe-2S]-[ferredoxin] + 2 S-adenosyl-L-methionine = (sulfur carrier)-H + biotin + 2 5'-deoxyadenosine + 2 L-methionine + 2 oxidized [2Fe-2S]-[ferredoxin]. It functions in the pathway cofactor biosynthesis; biotin biosynthesis; biotin from 7,8-diaminononanoate: step 2/2. Catalyzes the conversion of dethiobiotin (DTB) to biotin by the insertion of a sulfur atom into dethiobiotin via a radical-based mechanism. This chain is Biotin synthase, found in Corynebacterium urealyticum (strain ATCC 43042 / DSM 7109).